The primary structure comprises 172 residues: AIG2-like protein B (172 aa).

15 to 20 (YGSFQE) is a binding site for substrate. Glu-83 serves as the catalytic Proton acceptor. Positions 146 to 165 (KRNPQGKGRDDFSNVLKEED) are enriched in basic and acidic residues. Residues 146–172 (KRNPQGKGRDDFSNVLKEEDPANAPSS) form a disordered region.

Belongs to the gamma-glutamylcyclotransferase family. Expressed in flowerss, leaves, stems, seeds and roots.

The protein resides in the cell membrane. In terms of biological role, putative gamma-glutamylcyclotransferase. This Arabidopsis thaliana (Mouse-ear cress) protein is AIG2-like protein B.